Reading from the N-terminus, the 434-residue chain is Tryptophan synthase beta chain 2 (434 aa).

At Lys110 the chain carries N6-(pyridoxal phosphate)lysine.

It belongs to the TrpB family. As to quaternary structure, tetramer of two alpha and two beta chains. Requires pyridoxal 5'-phosphate as cofactor.

It catalyses the reaction (1S,2R)-1-C-(indol-3-yl)glycerol 3-phosphate + L-serine = D-glyceraldehyde 3-phosphate + L-tryptophan + H2O. It functions in the pathway amino-acid biosynthesis; L-tryptophan biosynthesis; L-tryptophan from chorismate: step 5/5. Functionally, the beta subunit is responsible for the synthesis of L-tryptophan from indole and L-serine. The protein is Tryptophan synthase beta chain 2 (trpB2) of Aquifex aeolicus (strain VF5).